The chain runs to 537 residues: Pentatricopeptide repeat-containing protein At1g02370, mitochondrial (537 aa).

Residues M1 to C18 constitute a mitochondrion transit peptide. 7 PPR repeats span residues H171–N205, N206–P240, C241–K275, T277–K307, N312–V346, N347–K377, and D382–P416.

The protein belongs to the PPR family. P subfamily.

It is found in the mitochondrion. This is Pentatricopeptide repeat-containing protein At1g02370, mitochondrial from Arabidopsis thaliana (Mouse-ear cress).